The chain runs to 89 residues: NADH-ubiquinone oxidoreductase chain 4L (89 aa).

A run of 3 helical transmembrane segments spans residues 1 to 21 (MNLSLILFLIGILGFVLNRKN), 22 to 42 (IILMLISIEIILLSVTFLILI), and 55 to 75 (FAIYIITIAGAESAIGLGILV).

This sequence belongs to the complex I subunit 4L family.

The protein resides in the mitochondrion membrane. The enzyme catalyses a ubiquinone + NADH + 5 H(+)(in) = a ubiquinol + NAD(+) + 4 H(+)(out). Its function is as follows. Core subunit of the mitochondrial membrane respiratory chain NADH dehydrogenase (Complex I) that is believed to belong to the minimal assembly required for catalysis. Complex I functions in the transfer of electrons from NADH to the respiratory chain. The immediate electron acceptor for the enzyme is believed to be ubiquinone. The protein is NADH-ubiquinone oxidoreductase chain 4L (ND4L) of Trichophyton rubrum (Athlete's foot fungus).